We begin with the raw amino-acid sequence, 348 residues long: Haptoglobin-related protein (348 aa).

Residues 1–18 (MSDLGAVISLLLWGRQLF) constitute a signal peptide (not cleaved). A Sushi domain is found at 34–87 (FPKPPEIANGYVEHLFRYQCKNYYRLRTEGDGVYTLNDKKQWINKAVGDKLPEC). The region spanning 104 to 346 (ILGGHLDAKG…IQHWVQKTIA (243 aa)) is the Peptidase S1 domain. Intrachain disulfides connect cysteine 251–cysteine 282 and cysteine 293–cysteine 323.

Belongs to the peptidase S1 family. In adult liver the amount of HPR mRNA is at the lower limit of detection, therefore the extent of its expression is at most less than 1000-fold that of the HP1F gene. No HPR mRNA can be detected in fetal liver. Expressed in Hep-G2 and leukemia MOLT-4 cell lines.

It is found in the secreted. In terms of biological role, primate-specific plasma protein associated with apolipoprotein L-I (apoL-I)-containing high-density lipoprotein (HDL). This HDL particle, termed trypanosome lytic factor-1 (TLF-1), mediates human innate immune protection against many species of African trypanosomes. Binds hemoglobin with high affinity and may contribute to the clearance of cell-free hemoglobin to allow hepatic recycling of heme iron. The chain is Haptoglobin-related protein (HPR) from Homo sapiens (Human).